We begin with the raw amino-acid sequence, 735 residues long: Catalase-peroxidase (735 aa).

Positions 1–26 are enriched in polar residues; the sequence is MENQNRQNASQCPFHGSITNQSSNRT. The segment at 1 to 29 is disordered; it reads MENQNRQNASQCPFHGSITNQSSNRTTNK. A cross-link (tryptophyl-tyrosyl-methioninium (Trp-Tyr) (with M-249)) is located at residues 100–223; it reads WHSAGTYRIG…LAASVMGLIY (124 aa). H101 acts as the Proton acceptor in catalysis. A cross-link (tryptophyl-tyrosyl-methioninium (Tyr-Met) (with W-100)) is located at residues 223–249; sequence YVNPEGPDGKPDPKAAARDIRETFRRM. Heme b is bound at residue H264.

Belongs to the peroxidase family. Peroxidase/catalase subfamily. As to quaternary structure, homodimer or homotetramer. Requires heme b as cofactor. In terms of processing, formation of the three residue Trp-Tyr-Met cross-link is important for the catalase, but not the peroxidase activity of the enzyme.

It catalyses the reaction H2O2 + AH2 = A + 2 H2O. The catalysed reaction is 2 H2O2 = O2 + 2 H2O. Functionally, bifunctional enzyme with both catalase and broad-spectrum peroxidase activity. This chain is Catalase-peroxidase, found in Geobacillus thermodenitrificans (strain NG80-2).